Reading from the N-terminus, the 502-residue chain is Glycerol kinase (502 aa).

Thr-13 provides a ligand contact to ADP. 3 residues coordinate ATP: Thr-13, Thr-14, and Ser-15. Residue Thr-13 coordinates sn-glycerol 3-phosphate. ADP is bound at residue Arg-17. Sn-glycerol 3-phosphate is bound by residues Arg-83, Glu-84, Tyr-136, and Asp-246. Positions 83, 84, 136, 246, and 247 each coordinate glycerol. ADP contacts are provided by Thr-268 and Gly-311. The ATP site is built by Thr-268, Gly-311, Gln-315, and Gly-412. The ADP site is built by Gly-412 and Asn-416.

Belongs to the FGGY kinase family.

It catalyses the reaction glycerol + ATP = sn-glycerol 3-phosphate + ADP + H(+). The protein operates within polyol metabolism; glycerol degradation via glycerol kinase pathway; sn-glycerol 3-phosphate from glycerol: step 1/1. Inhibited by fructose 1,6-bisphosphate (FBP). Functionally, key enzyme in the regulation of glycerol uptake and metabolism. Catalyzes the phosphorylation of glycerol to yield sn-glycerol 3-phosphate. This Francisella tularensis subsp. tularensis (strain WY96-3418) protein is Glycerol kinase.